The sequence spans 282 residues: Epoxide hydrolase LasB (282 aa).

Positions 1–133 (MPAETVRKEV…TDSSWTARPA (133 aa)) are lsd19A. Tyr-14 lines the substrate pocket. Catalysis depends on Asp-38, which acts as the Proton acceptor; for 5-exo epoxide-opening cyclization activity. Substrate contacts are provided by Glu-65 and His-146. The lsd19B stretch occupies residues 134–282 (PDEERRKELA…TDVSLLDPAA (149 aa)). The active-site Proton acceptor; for 6-endo epoxide-opening cyclization activity is the Asp-170. Substrate-binding residues include Arg-177, Glu-197, and Tyr-251.

In terms of biological role, epoxide hydrolase responsible for the double epoxide-opening cyclization of bisepoxyprelasalocid A to form lasalocid A, a polyether antibiotic. In vitro, accepts various substrate analogs differing in the left segment of lasalocid and epoxide stereochemistry to afford products with excellent regioselectivity. This chain is Epoxide hydrolase LasB (lsd19), found in Streptomyces lasalocidi (Streptomyces lasaliensis).